Here is a 431-residue protein sequence, read N- to C-terminus: Adenylosuccinate synthetase (431 aa).

GTP is bound by residues G13–K19 and G41–T43. The active-site Proton acceptor is the D14. D14 and G41 together coordinate Mg(2+). IMP is bound by residues D14 to K17, N39 to H42, T130, R144, Q225, T240, and R304. H42 (proton donor) is an active-site residue. S300–R306 contributes to the substrate binding site. Residues R306, K332–D334, and S414–G416 each bind GTP.

This sequence belongs to the adenylosuccinate synthetase family. In terms of assembly, homodimer. It depends on Mg(2+) as a cofactor.

The protein resides in the cytoplasm. The catalysed reaction is IMP + L-aspartate + GTP = N(6)-(1,2-dicarboxyethyl)-AMP + GDP + phosphate + 2 H(+). Its pathway is purine metabolism; AMP biosynthesis via de novo pathway; AMP from IMP: step 1/2. Functionally, plays an important role in the de novo pathway of purine nucleotide biosynthesis. Catalyzes the first committed step in the biosynthesis of AMP from IMP. This chain is Adenylosuccinate synthetase, found in Bordetella petrii (strain ATCC BAA-461 / DSM 12804 / CCUG 43448).